A 139-amino-acid polypeptide reads, in one-letter code: Putative pre-16S rRNA nuclease (139 aa).

The protein belongs to the YqgF nuclease family.

The protein resides in the cytoplasm. Could be a nuclease involved in processing of the 5'-end of pre-16S rRNA. In Photorhabdus laumondii subsp. laumondii (strain DSM 15139 / CIP 105565 / TT01) (Photorhabdus luminescens subsp. laumondii), this protein is Putative pre-16S rRNA nuclease.